A 240-amino-acid polypeptide reads, in one-letter code: tRNA pseudouridine synthase A (240 aa).

D50 functions as the Nucleophile in the catalytic mechanism. A substrate-binding site is contributed by Y109.

It belongs to the tRNA pseudouridine synthase TruA family. Homodimer.

The catalysed reaction is uridine(38/39/40) in tRNA = pseudouridine(38/39/40) in tRNA. Formation of pseudouridine at positions 38, 39 and 40 in the anticodon stem and loop of transfer RNAs. The sequence is that of tRNA pseudouridine synthase A from Campylobacter jejuni subsp. jejuni serotype O:6 (strain 81116 / NCTC 11828).